The primary structure comprises 689 residues: Methionine--tRNA ligase (689 aa).

The 'HIGH' region signature appears at Pro15–His25. Cys146, Cys149, Cys159, and Cys162 together coordinate Zn(2+). The 'KMSKS' region motif lies at Lys332–Ser336. Lys335 contacts ATP. The tRNA-binding domain occupies Asp588–Lys689.

Belongs to the class-I aminoacyl-tRNA synthetase family. MetG type 1 subfamily. Homodimer. It depends on Zn(2+) as a cofactor.

The protein resides in the cytoplasm. It carries out the reaction tRNA(Met) + L-methionine + ATP = L-methionyl-tRNA(Met) + AMP + diphosphate. Functionally, is required not only for elongation of protein synthesis but also for the initiation of all mRNA translation through initiator tRNA(fMet) aminoacylation. The polypeptide is Methionine--tRNA ligase (Shewanella baltica (strain OS155 / ATCC BAA-1091)).